A 398-amino-acid chain; its full sequence is MAAGAGARPAPRWVKALGEPLSAAQLRRLEDHRYSAAGESLFEPPLQLFWTWLLQWIPLWIAPNTITLFGLAINLFTTLVLIFYCPTVTEEAPYWTYLLCALGLFIYQSLDAIDGKQARRTNSCSPLGELFDHGCDSLSTVFMAIGASIAVRLGTHPDWLFFCSFVGMFMFYCAHWQTYVSGVLRFGRVDVTEIQVALVIVFLLSTFGGAMMWDYTIPILEIKLKILPVLGVVGGLIFSCSNYFHVILHGGVGKNGSTIAGTSVLSPGLHIGLIIILAIMIYKKSATNVFEKHPCLYTLMFGCVFAKVAQKLVIAHMTKSELYLQDTVFIGPGLLFLDQYFNNFIDEYVVLWIAMVITSFDMMIYFSSLCLQISRHLHLSIFKTSYQQAPEQVHKHID.

Ala-2 carries the post-translational modification N-acetylalanine. The Cytoplasmic portion of the chain corresponds to 2 to 62 (AAGAGARPAP…LLQWIPLWIA (61 aa)). The helical transmembrane segment at 63-83 (PNTITLFGLAINLFTTLVLIF) threads the bilayer. Residue Asn-64 coordinates CDP-choline. Residues 84–93 (YCPTVTEEAP) are Lumenal-facing. A helical membrane pass occupies residues 94–118 (YWTYLLCALGLFIYQSLDAIDGKQA). Positions 111 and 114 each coordinate Mg(2+). Arg-119 provides a ligand contact to CDP-choline. Over 119–125 (RRTNSCS) the chain is Cytoplasmic. A helical transmembrane segment spans residues 126-150 (PLGELFDHGCDSLSTVFMAIGASIA). Residue Asp-132 participates in Mg(2+) binding. His-133 (proton acceptor) is an active-site residue. Asp-136 contributes to the Mg(2+) binding site. Over 151–160 (VRLGTHPDWL) the chain is Lumenal. Residues 161–179 (FFCSFVGMFMFYCAHWQTY) traverse the membrane as a helical segment. Over 180–190 (VSGVLRFGRVD) the chain is Cytoplasmic. A helical membrane pass occupies residues 191–207 (VTEIQVALVIVFLLSTF). Residues 208 to 222 (GGAMMWDYTIPILEI) lie on the Lumenal side of the membrane. A helical transmembrane segment spans residues 223–248 (KLKILPVLGVVGGLIFSCSNYFHVIL). Residues 249–265 (HGGVGKNGSTIAGTSVL) lie on the Cytoplasmic side of the membrane. The helical transmembrane segment at 266 to 281 (SPGLHIGLIIILAIMI) threads the bilayer. Topologically, residues 282–293 (YKKSATNVFEKH) are lumenal. Residues 294 to 316 (PCLYTLMFGCVFAKVAQKLVIAH) form a helical membrane-spanning segment. At 317 to 329 (MTKSELYLQDTVF) the chain is on the cytoplasmic side. The chain crosses the membrane as a helical span at residues 330–339 (IGPGLLFLDQ). Over 340–346 (YFNNFID) the chain is Lumenal. A helical transmembrane segment spans residues 347 to 376 (EYVVLWIAMVITSFDMMIYFSSLCLQISRH). Residues 377–398 (LHLSIFKTSYQQAPEQVHKHID) lie on the Cytoplasmic side of the membrane.

It belongs to the CDP-alcohol phosphatidyltransferase class-I family. It depends on Mg(2+) as a cofactor. Mn(2+) serves as cofactor.

It localises to the golgi apparatus membrane. The enzyme catalyses CDP-choline + a 1,2-diacyl-sn-glycerol = a 1,2-diacyl-sn-glycero-3-phosphocholine + CMP + H(+). The catalysed reaction is 1-octadecanoyl-2-(5Z,8Z,11Z,14Z-eicosatetraenoyl)-sn-glycerol + CDP-choline = 1-octadecanoyl-2-(5Z,8Z,11Z,14Z-eicosatetraenoyl)-sn-glycero-3-phosphocholine + CMP + H(+). It catalyses the reaction 1-hexadecanoyl-2-(9Z-octadecenoyl)-sn-glycerol + CDP-choline = 1-hexadecanoyl-2-(9Z-octadecenoyl)-sn-glycero-3-phosphocholine + CMP + H(+). It carries out the reaction 1-hexadecanoyl-2-(4Z,7Z,10Z,13Z,16Z,19Z-docosahexaenoyl)-sn-glycerol + CDP-choline = 1-hexadecanoyl-2-(4Z,7Z,10Z,13Z,16Z,19Z-docosahexaenoyl)-sn-glycero-3-phosphocholine + CMP + H(+). The enzyme catalyses 1,2-dioctanoyl-sn-glycerol + CDP-choline = 1,2-dioctanoyl-sn-glycero-3-phosphocholine + CMP + H(+). Its pathway is phospholipid metabolism; phosphatidylcholine biosynthesis; phosphatidylcholine from phosphocholine: step 2/2. In terms of biological role, catalyzes the final step of de novo phosphatidylcholine (PC) synthesis, i.e. the transfer of choline phosphate from CDP-choline to the free hydroxyl of a diacylglycerol (DAG), producing a PC. It thereby plays a central role in the formation and maintenance of vesicular membranes. In Rattus norvegicus (Rat), this protein is Cholinephosphotransferase 1.